Reading from the N-terminus, the 1543-residue chain is Rho guanine nucleotide exchange factor 12 (1543 aa).

The disordered stretch occupies residues 1 to 62 (MSGTQSTITD…KTKSSSEESR (62 aa)). N-acetylserine is present on S2. Basic and acidic residues predominate over residues 28–45 (SPTDKKQKVERSSSHDFD). The residue at position 41 (S41) is a Phosphoserine. Residues 72 to 151 (CVIIQKDDNG…LTVQGRPPGS (80 aa)) form the PDZ domain. The stretch at 194–262 (VGEENNVVHN…LSKATGSAQD (69 aa)) forms a coiled coil. Positions 281 to 355 (AEADPGDGLC…GAPHIIGAED (75 aa)) are disordered. Residues 293–312 (DWSSGDASRPSSDSADSPKS) are compositionally biased toward low complexity. S309 bears the Phosphoserine mark. A compositionally biased stretch (basic and acidic residues) spans 313–329 (SLRERSYLEEAPERSEG). S341 carries the phosphoserine modification. Positions 367–558 (GQCSCFQSIE…LMYMKYLGVK (192 aa)) constitute an RGSL domain. The interval 574–710 (FLPKIKQSMK…DSTPRVPTTV (137 aa)) is disordered. Over residues 582-592 (MKKDREGEEKG) the composition is skewed to basic and acidic residues. Position 637 is a phosphoserine (S637). Residues 663 to 676 (ASSMSSATSGTALS) are compositionally biased toward low complexity. Residue T736 is modified to Phosphothreonine. A DH domain is found at 787–977 (KRQEVINELF…RQILNYVNQA (191 aa)). Positions 981–1004 (AENKQRLEDYQRRLDTSNLKLSEY) form a coiled coil. The PH domain occupies 1019 to 1132 (KMIHEGPLVW…WQDLICRMAA (114 aa)). Positions 1137-1158 (QSTKPIPLPQPPPCEGDNDEEE) are disordered. S1288, S1327, and S1377 each carry phosphoserine. Disordered regions lie at residues 1386-1405 (EAHSDDNPSEGDGAVKKEEK) and 1441-1468 (PVTGIPAVDSSHQQQHSPQNVHPEGPVS). Residues 1450 to 1460 (SSHQQQHSPQN) are compositionally biased toward polar residues. Phosphoserine occurs at positions 1457 and 1540.

Interacts with GNA12 and GNA13, probably through the RGS-like domain, with RHOA, PLXNB1 and PLXNB2, and through its PDZ domain with IGF1R beta subunit. Interacts with GCSAM. Found in a complex with ARHGEF11 and ARHGEF12; binding to ARHGEF11 and ARHGEF12 enhances CDC42 GEF activity of PLEKHG4B, and PLEKHG4B, in turn, inhibits ARHGEF11- and ARHGEF12-mediated RHOA activation. As to expression, expressed in brain, predominantly in neuronal cell bodies.

The protein localises to the cytoplasm. It is found in the membrane. In terms of biological role, may play a role in the regulation of RhoA GTPase by guanine nucleotide-binding alpha-12 (GNA12) and alpha-13 (GNA13). Acts as guanine nucleotide exchange factor (GEF) for RhoA GTPase and may act as GTPase-activating protein (GAP) for GNA12 and GNA13. The chain is Rho guanine nucleotide exchange factor 12 (Arhgef12) from Mus musculus (Mouse).